Reading from the N-terminus, the 286-residue chain is Lipoyl synthase (286 aa).

[4Fe-4S] cluster-binding residues include Cys-29, Cys-34, Cys-40, Cys-55, Cys-59, Cys-62, and Ser-265. In terms of domain architecture, Radical SAM core spans 41-254; that stretch reads WGSGTATFMI…EKIAYSLGFS (214 aa).

The protein belongs to the radical SAM superfamily. Lipoyl synthase family. It depends on [4Fe-4S] cluster as a cofactor.

Its subcellular location is the cytoplasm. The catalysed reaction is [[Fe-S] cluster scaffold protein carrying a second [4Fe-4S](2+) cluster] + N(6)-octanoyl-L-lysyl-[protein] + 2 oxidized [2Fe-2S]-[ferredoxin] + 2 S-adenosyl-L-methionine + 4 H(+) = [[Fe-S] cluster scaffold protein] + N(6)-[(R)-dihydrolipoyl]-L-lysyl-[protein] + 4 Fe(3+) + 2 hydrogen sulfide + 2 5'-deoxyadenosine + 2 L-methionine + 2 reduced [2Fe-2S]-[ferredoxin]. Its pathway is protein modification; protein lipoylation via endogenous pathway; protein N(6)-(lipoyl)lysine from octanoyl-[acyl-carrier-protein]: step 2/2. Catalyzes the radical-mediated insertion of two sulfur atoms into the C-6 and C-8 positions of the octanoyl moiety bound to the lipoyl domains of lipoate-dependent enzymes, thereby converting the octanoylated domains into lipoylated derivatives. The polypeptide is Lipoyl synthase (Sulfolobus acidocaldarius (strain ATCC 33909 / DSM 639 / JCM 8929 / NBRC 15157 / NCIMB 11770)).